Consider the following 331-residue polypeptide: UAP56-interacting factor (331 aa).

The short motif at 16-34 is the UAP56-binding motif element; that stretch reads APDKVDMSLDDIIRLNKKE. Disordered stretches follow at residues 30 to 51, 63 to 99, and 158 to 193; these read LNKK…LQKG, RARG…RRRG, and GQRR…TQRE. Residues 166–175 are compositionally biased toward polar residues; it reads TDIQRGLNST.

It belongs to the UIF family.

It is found in the nucleus. Its subcellular location is the nucleoplasm. The protein resides in the nucleus speckle. Required for mRNA export from the nucleus to the cytoplasm. Acts as an adapter that uses the ddx39b/uap56-nfx1 pathway to ensure efficient mRNA export and delivering to the nuclear pore. The polypeptide is UAP56-interacting factor (fyttd1) (Salmo salar (Atlantic salmon)).